Consider the following 228-residue polypeptide: Geranylgeranylglyceryl phosphate synthase (228 aa).

Residue K11 participates in sn-glycerol 1-phosphate binding. Mg(2+) contacts are provided by D13 and T39. Sn-glycerol 1-phosphate contacts are provided by residues 159-164, G189, and 209-210; these read YIEYSG and GN.

It belongs to the GGGP/HepGP synthase family. Group I subfamily. Requires Mg(2+) as cofactor.

Its subcellular location is the cytoplasm. The enzyme catalyses sn-glycerol 1-phosphate + (2E,6E,10E)-geranylgeranyl diphosphate = sn-3-O-(geranylgeranyl)glycerol 1-phosphate + diphosphate. It participates in membrane lipid metabolism; glycerophospholipid metabolism. Its function is as follows. Prenyltransferase that catalyzes the transfer of the geranylgeranyl moiety of geranylgeranyl diphosphate (GGPP) to the C3 hydroxyl of sn-glycerol-1-phosphate (G1P). This reaction is the first ether-bond-formation step in the biosynthesis of archaeal membrane lipids. In Methanoregula boonei (strain DSM 21154 / JCM 14090 / 6A8), this protein is Geranylgeranylglyceryl phosphate synthase.